The following is a 268-amino-acid chain: Cell division coordinator CpoB (268 aa).

A signal peptide spans 1–21 (MRMCRRVVTVLALSLPLAAWA). Residues 58 to 94 (QLFMQLQQMQDQLSRQQGIIEELQNDVSRMKQENLER) adopt a coiled-coil conformation. The tract at residues 104-146 (SGAAPAATPDNSSGGGASNAAPDAAAGAAAQQPAGSSQPGDPA) is disordered. Residues 121–143 (SNAAPDAAAGAAAQQPAGSSQPG) are compositionally biased toward low complexity. TPR repeat units lie at residues 149-181 (KLYY…YPNS), 185-218 (GNAQ…YPKH), and 222-255 (PDSL…YPGT).

The protein belongs to the CpoB family.

The protein resides in the periplasm. Its function is as follows. Mediates coordination of peptidoglycan synthesis and outer membrane constriction during cell division. The chain is Cell division coordinator CpoB from Pseudomonas putida (strain ATCC 47054 / DSM 6125 / CFBP 8728 / NCIMB 11950 / KT2440).